The following is a 429-amino-acid chain: Adenylosuccinate synthetase (429 aa).

GTP contacts are provided by residues 12 to 18 (GDEGKGK) and 40 to 42 (GHT). Residue Asp13 is the Proton acceptor of the active site. Mg(2+)-binding residues include Asp13 and Gly40. IMP is bound by residues 13-16 (DEGK), 38-41 (NAGH), Thr129, Arg143, Gln223, Thr238, and Arg302. His41 functions as the Proton donor in the catalytic mechanism. Substrate is bound at residue 298-304 (TVTGRQR). GTP is bound by residues Arg304, 330–332 (KID), and 412–414 (STS).

It belongs to the adenylosuccinate synthetase family. Homodimer. Mg(2+) is required as a cofactor.

Its subcellular location is the cytoplasm. The enzyme catalyses IMP + L-aspartate + GTP = N(6)-(1,2-dicarboxyethyl)-AMP + GDP + phosphate + 2 H(+). The protein operates within purine metabolism; AMP biosynthesis via de novo pathway; AMP from IMP: step 1/2. Its function is as follows. Plays an important role in the de novo pathway of purine nucleotide biosynthesis. Catalyzes the first committed step in the biosynthesis of AMP from IMP. This is Adenylosuccinate synthetase from Erythrobacter litoralis (strain HTCC2594).